Here is a 398-residue protein sequence, read N- to C-terminus: Subtilisin-like serine protease EN45_076310 (398 aa).

Residues 1-19 (MGFLKLLSTSLATLAVVNA) form the signal peptide. Residues 20–115 (GKLLTANDGD…VEPDMVVNAT (96 aa)) constitute a propeptide, removed in mature form. One can recognise an Inhibitor I9 domain in the interval 35–113 (SYIVVMNDGV…KYVEPDMVVN (79 aa)). N-linked (GlcNAc...) asparagine glycosylation is present at Asn113. An igE-binding region spans residues 124 to 134 (PSWGLSRISSK). In terms of domain architecture, Peptidase S8 spans 125-398 (SWGLSRISSK…KLLYNGINAQ (274 aa)). The active-site Charge relay system is the Asp157. Positions 163-170 (GHADFGGR) are igE-binding. The tract at residues 175 to 195 (TNTADNDDTDGNGHGTHTAST) is disordered. The Charge relay system role is filled by His188. The igE-binding stretch occupies residues 227 to 245 (IAGMDWAVKDSKSRGATGK). Asn249 is a glycosylation site (N-linked (GlcNAc...) asparagine). An igE-binding region spans residues 310–318 (SFTNFGSVV). The active-site Charge relay system is the Ser343.

It belongs to the peptidase S8 family.

It is found in the secreted. Inhibited by phenylmethanesulfonyl fluoride (PMSF) and diethyl pyrocarbonate (DEPC), but not by benzamidine. Functionally, serine protease that hydrolyzes casein, gelatin and human collagen type IV, but not elastin in vitro. Hydrolyzes OCLN of the human lung epithelial cells at 202-Gln-|-Ser-203 and Gln-211-|-Ile-212. The sequence is that of Subtilisin-like serine protease EN45_076310 from Penicillium chrysogenum (Penicillium notatum).